Reading from the N-terminus, the 79-residue chain is MSFEVFEKLESKVQQAIDTITLLQMEIEELKDKNNTLSQEVQAASGNHESLVRENQQLKEEQHVWQDRLRALLGKMEEV.

Residues 4 to 78 adopt a coiled-coil conformation; the sequence is EVFEKLESKV…LRALLGKMEE (75 aa).

It belongs to the ZapB family. Homodimer. The ends of the coiled-coil dimer bind to each other, forming polymers. Interacts with FtsZ.

It is found in the cytoplasm. In terms of biological role, non-essential, abundant cell division factor that is required for proper Z-ring formation. It is recruited early to the divisome by direct interaction with FtsZ, stimulating Z-ring assembly and thereby promoting cell division earlier in the cell cycle. Its recruitment to the Z-ring requires functional FtsA or ZipA. This is Cell division protein ZapB from Serratia proteamaculans (strain 568).